A 276-amino-acid chain; its full sequence is Dermonecrotic toxin Ls4SicTox-alphaIII1i (276 aa).

Residue H3 is part of the active site. Mg(2+)-binding residues include E23 and D25. The active-site Nucleophile is H38. A disulfide bridge connects residues C42 and C48. D82 contacts Mg(2+).

It belongs to the arthropod phospholipase D family. Class I subfamily. Mg(2+) is required as a cofactor. Expressed by the venom gland.

The protein resides in the secreted. It carries out the reaction an N-(acyl)-sphingosylphosphocholine = an N-(acyl)-sphingosyl-1,3-cyclic phosphate + choline. It catalyses the reaction an N-(acyl)-sphingosylphosphoethanolamine = an N-(acyl)-sphingosyl-1,3-cyclic phosphate + ethanolamine. The enzyme catalyses a 1-acyl-sn-glycero-3-phosphocholine = a 1-acyl-sn-glycero-2,3-cyclic phosphate + choline. The catalysed reaction is a 1-acyl-sn-glycero-3-phosphoethanolamine = a 1-acyl-sn-glycero-2,3-cyclic phosphate + ethanolamine. In terms of biological role, dermonecrotic toxins cleave the phosphodiester linkage between the phosphate and headgroup of certain phospholipids (sphingolipid and lysolipid substrates), forming an alcohol (often choline) and a cyclic phosphate. This toxin acts on sphingomyelin (SM). It may also act on ceramide phosphoethanolamine (CPE), lysophosphatidylcholine (LPC) and lysophosphatidylethanolamine (LPE), but not on lysophosphatidylserine (LPS), and lysophosphatidylglycerol (LPG). It acts by transphosphatidylation, releasing exclusively cyclic phosphate products as second products. Induces dermonecrosis, hemolysis, increased vascular permeability, edema, inflammatory response, and platelet aggregation. The polypeptide is Dermonecrotic toxin Ls4SicTox-alphaIII1i (Loxosceles sp. (strain 4 GJB-2008) (Recluse spider)).